The primary structure comprises 169 residues: Peptide deformylase (169 aa).

Residues Cys91 and His133 each contribute to the Fe cation site. Glu134 is an active-site residue. Position 137 (His137) interacts with Fe cation.

The protein belongs to the polypeptide deformylase family. It depends on Fe(2+) as a cofactor.

The catalysed reaction is N-terminal N-formyl-L-methionyl-[peptide] + H2O = N-terminal L-methionyl-[peptide] + formate. Its function is as follows. Removes the formyl group from the N-terminal Met of newly synthesized proteins. Requires at least a dipeptide for an efficient rate of reaction. N-terminal L-methionine is a prerequisite for activity but the enzyme has broad specificity at other positions. This Klebsiella pneumoniae subsp. pneumoniae (strain ATCC 700721 / MGH 78578) protein is Peptide deformylase.